We begin with the raw amino-acid sequence, 263 residues long: tRNA1(Val) (adenine(37)-N6)-methyltransferase (263 aa).

The protein belongs to the methyltransferase superfamily. tRNA (adenine-N(6)-)-methyltransferase family.

It localises to the cytoplasm. The catalysed reaction is adenosine(37) in tRNA1(Val) + S-adenosyl-L-methionine = N(6)-methyladenosine(37) in tRNA1(Val) + S-adenosyl-L-homocysteine + H(+). Functionally, specifically methylates the adenine in position 37 of tRNA(1)(Val) (anticodon cmo5UAC). This Salmonella choleraesuis (strain SC-B67) protein is tRNA1(Val) (adenine(37)-N6)-methyltransferase.